A 216-amino-acid chain; its full sequence is Cytochrome c biogenesis ATP-binding export protein CcmA (216 aa).

The region spanning 11 to 216 (VSASKLTCIR…RKIRLDYRFV (206 aa)) is the ABC transporter domain. 43–50 (GPNGAGKT) is a binding site for ATP.

This sequence belongs to the ABC transporter superfamily. CcmA exporter (TC 3.A.1.107) family. As to quaternary structure, the complex is composed of two ATP-binding proteins (CcmA) and two transmembrane proteins (CcmB).

The protein localises to the cell inner membrane. It catalyses the reaction heme b(in) + ATP + H2O = heme b(out) + ADP + phosphate + H(+). In terms of biological role, part of the ABC transporter complex CcmAB involved in the biogenesis of c-type cytochromes; once thought to export heme, this seems not to be the case, but its exact role is uncertain. Responsible for energy coupling to the transport system. This chain is Cytochrome c biogenesis ATP-binding export protein CcmA, found in Shewanella sp. (strain MR-7).